Reading from the N-terminus, the 134-residue chain is Small ribosomal subunit protein bS6 (134 aa).

This sequence belongs to the bacterial ribosomal protein bS6 family.

Functionally, binds together with bS18 to 16S ribosomal RNA. The polypeptide is Small ribosomal subunit protein bS6 (Chlorobium phaeobacteroides (strain BS1)).